The sequence spans 226 residues: 7-cyano-7-deazaguanine synthase (226 aa).

An ATP-binding site is contributed by 8–18 (LSGGLDSTTTL). Zn(2+) is bound by residues C188, C198, C201, and C204.

Belongs to the QueC family. Requires Zn(2+) as cofactor.

The enzyme catalyses 7-carboxy-7-deazaguanine + NH4(+) + ATP = 7-cyano-7-deazaguanine + ADP + phosphate + H2O + H(+). It participates in purine metabolism; 7-cyano-7-deazaguanine biosynthesis. Functionally, catalyzes the ATP-dependent conversion of 7-carboxy-7-deazaguanine (CDG) to 7-cyano-7-deazaguanine (preQ(0)). This chain is 7-cyano-7-deazaguanine synthase, found in Nitrosomonas eutropha (strain DSM 101675 / C91 / Nm57).